The following is a 292-amino-acid chain: Ribosomal RNA small subunit methyltransferase A (292 aa).

S-adenosyl-L-methionine is bound by residues N29, L31, G56, E77, D102, and N127.

The protein belongs to the class I-like SAM-binding methyltransferase superfamily. rRNA adenine N(6)-methyltransferase family. RsmA subfamily.

Its subcellular location is the cytoplasm. The catalysed reaction is adenosine(1518)/adenosine(1519) in 16S rRNA + 4 S-adenosyl-L-methionine = N(6)-dimethyladenosine(1518)/N(6)-dimethyladenosine(1519) in 16S rRNA + 4 S-adenosyl-L-homocysteine + 4 H(+). Its function is as follows. Specifically dimethylates two adjacent adenosines (A1518 and A1519) in the loop of a conserved hairpin near the 3'-end of 16S rRNA in the 30S particle. May play a critical role in biogenesis of 30S subunits. The protein is Ribosomal RNA small subunit methyltransferase A of Bacillus subtilis (strain 168).